Reading from the N-terminus, the 462-residue chain is Squalene synthase ERG9 (462 aa).

A helical transmembrane segment spans residues 406 to 426; that stretch reads AVVLFGVVIAALVCISGLMLG.

The protein belongs to the phytoene/squalene synthase family. It depends on Mg(2+) as a cofactor.

It is found in the endoplasmic reticulum membrane. The protein localises to the microsome. It carries out the reaction 2 (2E,6E)-farnesyl diphosphate + NADPH + H(+) = squalene + 2 diphosphate + NADP(+). It catalyses the reaction 2 (2E,6E)-farnesyl diphosphate + NADH + H(+) = squalene + 2 diphosphate + NAD(+). Its pathway is terpene metabolism; lanosterol biosynthesis; lanosterol from farnesyl diphosphate: step 1/3. It functions in the pathway steroid metabolism; ergosterol biosynthesis. Squalene synthase; part of the third module of ergosterol biosynthesis pathway that includes the late steps of the pathway. ERG9 produces squalene from 2 farnesyl pyrophosphate moieties. The third module or late pathway involves the ergosterol synthesis itself through consecutive reactions that mainly occur in the endoplasmic reticulum (ER) membrane. Firstly, the squalene synthase ERG9 catalyzes the condensation of 2 farnesyl pyrophosphate moieties to form squalene, which is the precursor of all steroids. Squalene synthase is crucial for balancing the incorporation of farnesyl diphosphate (FPP) into sterol and nonsterol isoprene synthesis. Secondly, squalene is converted into lanosterol by the consecutive action of the squalene epoxidase ERG1 and the lanosterol synthase ERG7. Then, the delta(24)-sterol C-methyltransferase ERG6 methylates lanosterol at C-24 to produce eburicol. Eburicol is the substrate of the sterol 14-alpha demethylase encoded by CYP51A, CYP51B and CYP51C, to yield 4,4,24-trimethyl ergosta-8,14,24(28)-trienol. CYP51B encodes the enzyme primarily responsible for sterol 14-alpha-demethylation, and plays an essential role in ascospore formation. CYP51A encodes an additional sterol 14-alpha-demethylase, induced on ergosterol depletion and responsible for the intrinsic variation in azole sensitivity. The third CYP51 isoform, CYP51C, does not encode a sterol 14-alpha-demethylase, but is required for full virulence on host wheat ears. The C-14 reductase ERG24 then reduces the C14=C15 double bond which leads to 4,4-dimethylfecosterol. A sequence of further demethylations at C-4, involving the C-4 demethylation complex containing the C-4 methylsterol oxidases ERG25, the sterol-4-alpha-carboxylate 3-dehydrogenase ERG26 and the 3-keto-steroid reductase ERG27, leads to the production of fecosterol via 4-methylfecosterol. ERG28 has a role as a scaffold to help anchor ERG25, ERG26 and ERG27 to the endoplasmic reticulum. The C-8 sterol isomerase ERG2 then catalyzes the reaction which results in unsaturation at C-7 in the B ring of sterols and thus converts fecosterol to episterol. The sterol-C5-desaturases ERG3A and ERG3BB then catalyze the introduction of a C-5 double bond in the B ring to produce 5-dehydroepisterol. The C-22 sterol desaturases ERG5A and ERG5B further convert 5-dehydroepisterol into ergosta-5,7,22,24(28)-tetraen-3beta-ol by forming the C-22(23) double bond in the sterol side chain. Finally, ergosta-5,7,22,24(28)-tetraen-3beta-ol is substrate of the C-24(28) sterol reductase ERG4 to produce ergosterol. The sequence is that of Squalene synthase ERG9 from Gibberella zeae (strain ATCC MYA-4620 / CBS 123657 / FGSC 9075 / NRRL 31084 / PH-1) (Wheat head blight fungus).